A 559-amino-acid polypeptide reads, in one-letter code: BTB/POZ domain-containing protein At5g47800 (559 aa).

Residues 28–96 (NDLVIRINNT…CYDITINLSA (69 aa)) form the BTB domain. Residues 199–476 (DWWTEDISDL…VQALFFDQES (278 aa)) form the NPH3 domain. Tyr-417 bears the Phosphotyrosine mark. Residues 477–489 (GSKGASSRSESQE) are compositionally biased toward low complexity. Disordered regions lie at residues 477-502 (GSKG…TDEH) and 524-559 (EGCK…SRDR). Composition is skewed to basic and acidic residues over residues 492–502 (TRGKETPTDEH) and 524–541 (EGCK…DPKK).

Belongs to the NPH3 family.

It participates in protein modification; protein ubiquitination. Its function is as follows. May act as a substrate-specific adapter of an E3 ubiquitin-protein ligase complex (CUL3-RBX1-BTB) which mediates the ubiquitination and subsequent proteasomal degradation of target proteins. The chain is BTB/POZ domain-containing protein At5g47800 from Arabidopsis thaliana (Mouse-ear cress).